The following is a 752-amino-acid chain: Photosystem I P700 chlorophyll a apoprotein A1 (752 aa).

The next 8 membrane-spanning stretches (helical) occupy residues 73-96 (IFSAHFGHLAVVMVWLSGMIFHGA), 159-182 (LYVTAIGGLVLAGLFLFAGWFHYH), 198-222 (LNHHLQVLLGCGSLGWAGHLIHVSA), 294-312 (IAHHHLAIAVLFIVAGHQY), 349-372 (WHAQLATNLAFLGSLTIIIAHHMY), 388-414 (LCIFTHHIWIGGFLIVGGAAHAAIFMV), 436-458 (AIISHLNWVCIFLGFHSFGLYIH), and 533-551 (FLIHHIHAFTIHVTVLILL). Residues C575 and C584 each contribute to the [4Fe-4S] cluster site. 2 consecutive transmembrane segments (helical) span residues 591-612 (HVFLGLFWMYNSLSIVIFHFSW) and 666-688 (LSAYGLLFLGAHFVWAFSLMFLF). H677 contributes to the chlorophyll a' binding site. Chlorophyll a is bound by residues M685 and Y693. W694 lines the phylloquinone pocket. The chain crosses the membrane as a helical span at residues 726 to 746 (AVGVAHYLLGGIATTWAFFHA).

The protein belongs to the PsaA/PsaB family. As to quaternary structure, the PsaA/B heterodimer binds the P700 chlorophyll special pair and subsequent electron acceptors. PSI consists of a core antenna complex that captures photons, and an electron transfer chain that converts photonic excitation into a charge separation. The cyanobacterial PSI reaction center is composed of one copy each of PsaA,B,C,D,E,F,I,J,K,L,M and X, and forms trimeric complexes. It depends on PSI electron transfer chain: 5 chlorophyll a, 1 chlorophyll a', 2 phylloquinones and 3 4Fe-4S clusters. PSI core antenna: 90 chlorophyll a, 22 carotenoids, 3 phospholipids and 1 galactolipid. P700 is a chlorophyll a/chlorophyll a' dimer, A0 is one or more chlorophyll a, A1 is one or both phylloquinones and FX is a shared 4Fe-4S iron-sulfur center. as a cofactor.

It localises to the cellular thylakoid membrane. It carries out the reaction reduced [plastocyanin] + hnu + oxidized [2Fe-2S]-[ferredoxin] = oxidized [plastocyanin] + reduced [2Fe-2S]-[ferredoxin]. Functionally, psaA and PsaB bind P700, the primary electron donor of photosystem I (PSI), as well as the electron acceptors A0, A1 and FX. PSI is a plastocyanin/cytochrome c6-ferredoxin oxidoreductase, converting photonic excitation into a charge separation, which transfers an electron from the donor P700 chlorophyll pair to the spectroscopically characterized acceptors A0, A1, FX, FA and FB in turn. Oxidized P700 is reduced on the lumenal side of the thylakoid membrane by plastocyanin or cytochrome c6. The polypeptide is Photosystem I P700 chlorophyll a apoprotein A1 (Nostoc punctiforme (strain ATCC 29133 / PCC 73102)).